The primary structure comprises 215 residues: Adenylate kinase (215 aa).

10–15 (GAGKGT) contacts ATP. The tract at residues 30–59 (STGDMLRSAIKSGSELGKKAKQVMDAGQLV) is NMP. AMP is bound by residues T31, R36, 57–59 (QLV), 85–88 (GFPR), and Q92. An LID region spans residues 122–159 (GRRVHPGSGRVYHVEHNPPKVEGKDDETGEDLVVRPDD). ATP is bound by residues R123 and 132-133 (VY). The segment at 128-151 (GSGRVYHVEHNPPKVEGKDDETGE) is disordered. Positions 133–144 (YHVEHNPPKVEG) are enriched in basic and acidic residues. The AMP site is built by R156 and R167. Positions 195 to 215 (KIDGTQPVERVSEQLGDLLRK) are disordered. ATP is bound at residue Q200.

This sequence belongs to the adenylate kinase family. As to quaternary structure, monomer.

The protein localises to the cytoplasm. The enzyme catalyses AMP + ATP = 2 ADP. The protein operates within purine metabolism; AMP biosynthesis via salvage pathway; AMP from ADP: step 1/1. Its function is as follows. Catalyzes the reversible transfer of the terminal phosphate group between ATP and AMP. Plays an important role in cellular energy homeostasis and in adenine nucleotide metabolism. The sequence is that of Adenylate kinase from Idiomarina loihiensis (strain ATCC BAA-735 / DSM 15497 / L2-TR).